Reading from the N-terminus, the 812-residue chain is Probable beta-glucosidase D (812 aa).

A signal peptide spans 1–18 (MRVPSLSVLSFLLGTALA). N53 and N188 each carry an N-linked (GlcNAc...) asparagine glycan. The interval 186–248 (ETNRTGGMGG…GMGGGMAGSS (63 aa)) is disordered. Residues 191-207 (GGMGGGGGAPGGGGMGR) are compositionally biased toward gly residues. Polar residues predominate over residues 211-225 (FSSSVPGGMSPTSSA). Residues 236–245 (GGSGMGGGMA) are compositionally biased toward gly residues. N-linked (GlcNAc...) asparagine glycosylation is present at N296. D324 is an active-site residue. N360, N384, N422, N501, N592, and N646 each carry an N-linked (GlcNAc...) asparagine glycan.

This sequence belongs to the glycosyl hydrolase 3 family.

Its subcellular location is the secreted. It carries out the reaction Hydrolysis of terminal, non-reducing beta-D-glucosyl residues with release of beta-D-glucose.. It functions in the pathway glycan metabolism; cellulose degradation. Beta-glucosidases are one of a number of cellulolytic enzymes involved in the degradation of cellulosic biomass. Catalyzes the last step releasing glucose from the inhibitory cellobiose. This chain is Probable beta-glucosidase D (bglD), found in Emericella nidulans (strain FGSC A4 / ATCC 38163 / CBS 112.46 / NRRL 194 / M139) (Aspergillus nidulans).